The sequence spans 748 residues: Pentatricopeptide repeat-containing protein At3g13880 (748 aa).

PPR repeat units lie at residues 46–80 (DSEGYKILFQTAAKSGSVVLGKLAHGHMIKSSLNP), 81–111 (CLYLLNNLLNMYCKCRELGFARQLFDRMPER), 112–146 (NIISFNSLISGYTQMGFYEQAMELFLEAREANLKL), 147–181 (DKFTYAGALGFCGERCDLDLGELLHGLVVVNGLSQ), 182–212 (QVFLINVLIDMYSKCGKLDQAMSLFDRCDER), 213–247 (DQVSWNSLISGYVRVGAAEEPLNLLAKMHRDGLNL), 248–285 (TTYALGSVLKACCINLNEGFIEKGMAIHCYTAKLGMEF), 286–316 (DIVVRTALLDMYAKNGSLKEAIKLFSLMPSK), 317–356 (NVVTYNAMISGFLQMDEITDEASSEAFKLFMDMQRRGLEP), 357–391 (SPSTFSVVLKACSAAKTLEYGRQIHALICKNNFQS), 392–422 (DEFIGSALIELYALMGSTEDGMQCFASTSKQ), 423–457 (DIASWTSMIDCHVQNEQLESAFDLFRQLFSSHIRP), 458–492 (EEYTVSLMMSACADFAALSSGEQIQGYAIKSGIDA), 493–523 (FTSVKTSSISMYAKSGNMPLANQVFIEVQNP), 524–558 (DVATYSAMISSLAQHGSANEALNIFESMKTHGIKP), 559–589 (NQQAFLGVLIACCHGGLVTQGLKYFQCMKND), and 595–629 (NEKHFTCLVDLLGRTGRLSDAENLILSSGFQDHPV). The segment at 630-705 (TWRALLSSCR…EPALSWIVIG (76 aa)) is type E motif. The segment at 706 to 736 (NQTHSFAVADLSHPSSQMIYTMLETMDNVDF) is type E(+) motif.

Belongs to the PPR family. PCMP-E subfamily.

This Arabidopsis thaliana (Mouse-ear cress) protein is Pentatricopeptide repeat-containing protein At3g13880 (PCMP-E89).